The chain runs to 140 residues: Large ribosomal subunit protein uL11 (140 aa).

It belongs to the universal ribosomal protein uL11 family. In terms of assembly, part of the ribosomal stalk of the 50S ribosomal subunit. Interacts with L10 and the large rRNA to form the base of the stalk. L10 forms an elongated spine to which L12 dimers bind in a sequential fashion forming a multimeric L10(L12)X complex. One or more lysine residues are methylated.

In terms of biological role, forms part of the ribosomal stalk which helps the ribosome interact with GTP-bound translation factors. The chain is Large ribosomal subunit protein uL11 from Staphylococcus carnosus (strain TM300).